A 383-amino-acid chain; its full sequence is Podocin (383 aa).

Positions 1–41 are enriched in basic and acidic residues; sequence MERRARSSSRESRGRGGRTPHKENKRAKAERSGGGRGRQEA. The disordered stretch occupies residues 1 to 76; it reads MERRARSSSR…VDEVRGSGEE (76 aa). Residues 1-102 are Cytoplasmic-facing; that stretch reads MERRARSSSR…TKSSGLGACE (102 aa). Cysteine 101 carries the S-palmitoyl cysteine lipid modification. An intramembrane segment occupies 103 to 123; it reads WLLVLISLLFIIMTFPFSIWF. The Cytoplasmic segment spans residues 124–383; the sequence is CVKVVQEYER…NPKKKDSPML (260 aa). Residue glutamine 287 is glycosylated (N-linked (GlcNAc...) asparagine). The interval 355-383 is disordered; sequence NRTQGSLPFPSPSKPVEPLNPKKKDSPML. Positions 374–383 are enriched in basic and acidic residues; that stretch reads NPKKKDSPML.

It belongs to the band 7/mec-2 family. In terms of assembly, interacts with nephrin/NPHS1 and KIRREL1. Interacts directly with CD2AP. Interacts with DDN. Glycosylated. In terms of tissue distribution, almost exclusively expressed in the podocytes of fetal and mature kidney glomeruli.

It is found in the cell membrane. The protein resides in the endoplasmic reticulum. Functionally, plays a role in the regulation of glomerular permeability, acting probably as a linker between the plasma membrane and the cytoskeleton. This is Podocin (NPHS2) from Homo sapiens (Human).